Reading from the N-terminus, the 585-residue chain is Conglutin alpha 3 (585 aa).

Positions 1-23 (MANPFLLSLSLCLVLLYTSACLG) are cleaved as a signal peptide. 2 disulfides stabilise this stretch: cysteine 32–cysteine 65 and cysteine 108–cysteine 406. The Cupin type-1 1 domain maps to 37-258 (LNALEPDNRI…ALNIDEDTVH (222 aa)). Disordered stretches follow at residues 113–147 (EEAQQSQSRQERRRGQRSQSQEQEDSHQKIRHFRE), 199–240 (EEYP…ILSG), and 283–402 (KWQE…NGLE). Basic and acidic residues predominate over residues 136 to 147 (EDSHQKIRHFRE). The span at 211–224 (RQQHQRPSGRRHGQ) shows a compositional bias: basic residues. Positions 309–320 (REEEEKEEEDEP) are enriched in acidic residues. Over residues 338–350 (ERGRGRGGSEWKR) the composition is skewed to basic and acidic residues. Residues 412 to 558 (ENIADPTRAD…AFRLSLNQVS (147 aa)) form the Cupin type-1 2 domain. A compositionally biased stretch (polar residues) spans 565–579 (NHNPLVTPQSQSQDH). A disordered region spans residues 565–585 (NHNPLVTPQSQSQDHNLVKVA).

It belongs to the 11S seed storage protein (globulins) family. Hexamer; each subunit is composed of an acidic and a basic chain derived from a single precursor and linked by a disulfide bond. Component of globulins complexes which accumulate in seeds.

Its function is as follows. Sulfur-rich seed storage protein. This protein found in the seeds of many leguminous and non-leguminous plants is the source of sulfur-containing amino acids in seed meals. This chain is Conglutin alpha 3, found in Lupinus angustifolius (Narrow-leaved blue lupine).